Here is a 56-residue protein sequence, read N- to C-terminus: Ovomucoid (56 aa).

The Kazal-like domain occupies 6–56 (VDCSEYPKPACTLEYRPLCGSDSKTYANKCNFCNAVVESNGTLTLSHFGKC). Disulfide bonds link C8-C38, C16-C35, and C24-C56. A glycan (N-linked (GlcNAc...) asparagine) is linked at N45.

Its subcellular location is the secreted. This chain is Ovomucoid, found in Oreortyx pictus (Mountain quail).